Here is a 345-residue protein sequence, read N- to C-terminus: UbiA prenyltransferase domain-containing protein 1 (345 aa).

The next 8 membrane-spanning stretches (helical) occupy residues 60–80, 90–110, 141–161, 169–189, 213–233, 251–273, 285–305, and 324–344; these read LALR…GTAI, LLLF…GNLV, VRFG…LYFI, LALI…GIGF, AVQV…LALS, QAGI…YNLL, ATRY…AFSL, and LNLL…AGSL.

Belongs to the UbiA prenyltransferase family.

The protein localises to the endoplasmic reticulum membrane. Its subcellular location is the golgi apparatus membrane. It localises to the mitochondrion membrane. It catalyses the reaction menadiol + (2E,6E,10E)-geranylgeranyl diphosphate = menaquinol-4 + diphosphate. It carries out the reaction all-trans-decaprenyl diphosphate + 4-hydroxybenzoate = 4-hydroxy-3-(all-trans-decaprenyl)benzoate + diphosphate. It functions in the pathway quinol/quinone metabolism; menaquinone biosynthesis. The protein operates within cofactor biosynthesis; ubiquinone biosynthesis. Its function is as follows. Prenyltransferase that mediates the formation of menaquinone-4 (MK-4) and coenzyme Q10. MK-4 is a vitamin K2 isoform required for endothelial cell development. Mediates the conversion of phylloquinone (PK) into MK-4, probably by cleaving the side chain of phylloquinone (PK) to release 2-methyl-1,4-naphthoquinone (menadione; K3) and then prenylating it with geranylgeranyl pyrophosphate (GGPP) to form MK-4. Also plays a role in cardiovascular development independently of MK-4 biosynthesis, by acting as a coenzyme Q10 biosynthetic enzyme: coenzyme Q10, also named ubiquinone, plays an important antioxidant role in the cardiovascular system. Mediates biosynthesis of coenzyme Q10 in the Golgi membrane, leading to protect cardiovascular tissues from NOS3/eNOS-dependent oxidative stress. This chain is UbiA prenyltransferase domain-containing protein 1 (ubiad1), found in Xenopus tropicalis (Western clawed frog).